The primary structure comprises 1789 residues: Protein TIC 214 (1789 aa).

A run of 6 helical transmembrane segments spans residues 19–39, 68–88, 91–111, 133–153, 176–196, and 227–247; these read IINS…FSIG, FIAG…HLAL, PHTI…WNNH, VFLN…SSML, VGWL…LVWI, and IFSI…PSPI.

Belongs to the TIC214 family. As to quaternary structure, part of the Tic complex.

The protein resides in the plastid. Its subcellular location is the chloroplast inner membrane. In terms of biological role, involved in protein precursor import into chloroplasts. May be part of an intermediate translocation complex acting as a protein-conducting channel at the inner envelope. The chain is Protein TIC 214 from Capsella bursa-pastoris (Shepherd's purse).